The sequence spans 387 residues: N6-succino-2-amino-2'-deoxyadenylate synthase (387 aa).

S14 serves as the catalytic Proton acceptor. Positions 14, 15, 16, 17, and 18 each coordinate ATP. S14 lines the dGMP pocket. S14 is a Mg(2+) binding site. Residue N40 coordinates dGMP. ATP contacts are provided by G42, H43, and T44. Residue G42 participates in Mg(2+) binding. The dGMP site is built by S125, T126, and R140. Position 207 (Q207) interacts with ATP. T222 contributes to the dGMP binding site. A Mg(2+)-binding site is contributed by T293. L-aspartate is bound by residues T293, V294, and R299. ATP contacts are provided by N324 and N327.

The protein belongs to the Caudovirales PurZ family. The cofactor is Mg(2+).

The enzyme catalyses dGMP + L-aspartate + ATP = (2S)-2-amino-2'-deoxyadenylo-succinate + ADP + phosphate + 2 H(+). Its pathway is purine metabolism. Its function is as follows. Involved in the synthesis of the atypical nucleotide dZTP (2-amino-2'-deoxyadenosine-5'-triphosphate). Catalyzes the condensation of aspartate with deoxyguanylate into dSMP (N6-succino-2-amino-2'-deoxyadenylate), which undergoes defumarylation and phosphorylation respectively by host PurB and guanylate/nucleoside diphosphate kinases to give dZTP. dZTP is integrated into the viral genome instead of adenine by the viral DNA polymerase. This Z-base probably completely replaces adenosine and forms a triple bond to the opposite T-base. The resulting non-standard viral DNA is called Z-genome. The chemically modified DNA is probably harder for the host bacteria to digest with nucleases or restriction enzymes. The polypeptide is N6-succino-2-amino-2'-deoxyadenylate synthase (Acinetobacter phage SH-Ab 15497).